The sequence spans 580 residues: High affinity choline transporter 1 (580 aa).

Residues 1–6 (MPFHVE) lie on the Extracellular side of the membrane. The helical transmembrane segment at 7–27 (GLVAIILFYLLIFLVGIWAAW) threads the bilayer. The Cytoplasmic segment spans residues 28 to 48 (KTKNSGNAEERSEAIIVGGRD). Residues 49-69 (IGLLVGGFTMTATWVGGGYIN) form a helical membrane-spanning segment. The Extracellular segment spans residues 70 to 81 (GTAEAVYGPGCG). Residues 82-102 (LAWAQAPIGYSLSLILGGLFF) traverse the membrane as a helical segment. Residues 103 to 125 (AKPMRSKGYVTMLDPFQQIYGKR) are Cytoplasmic-facing. The chain crosses the membrane as a helical span at residues 126–146 (MGGLLFIPALMGEMFWAAAIF). At 147-164 (SALGATISVIIDVDVNIS) the chain is on the extracellular side. A helical transmembrane segment spans residues 165 to 185 (VIVSALIAILYTLVGGLYSVA). Over 186 to 191 (YTDVVQ) the chain is Cytoplasmic. Residues 192–212 (LFCIFIGLWISVPFALSHPAV) traverse the membrane as a helical segment. Residues 213–237 (TDIGFTAVHAKYQSPWLGTIESVEV) are Extracellular-facing. The helical transmembrane segment at 238 to 258 (YTWLDNFLLLMLGGIPWQAYF) threads the bilayer. At 259 to 274 (QRVLSSSSATYAQVLS) the chain is on the cytoplasmic side. Residues 275-295 (FLAAFGCLVMALPAICIGAIG) traverse the membrane as a helical segment. At 296 to 317 (ASTDWNQTAYGFPDPKTKEEAD) the chain is on the extracellular side. Asn-301 carries N-linked (GlcNAc...) asparagine glycosylation. Residues 318–338 (MILPIVLQYLCPVYISFFGLG) form a helical membrane-spanning segment. Residues 339–376 (AVSAAVMSSADSSILSASSMFARNIYQLSFRQNASDKE) are Cytoplasmic-facing. The chain crosses the membrane as a helical span at residues 377-397 (IVWVMRITVFVFGASATAMAL). The Extracellular segment spans residues 398 to 406 (LTKTVYGLW). Residues 407 to 427 (YLSSDLVYIIIFPQLLCVLFI) form a helical membrane-spanning segment. At 428 to 435 (KGTNTYGA) the chain is on the cytoplasmic side. A helical membrane pass occupies residues 436–456 (VAGYIFGLFLRITGGEPYLYL). The Extracellular portion of the chain corresponds to 457–481 (QPLIFYPGYYPDKNGIYNQRFPFKT). Residues 482–502 (LSMVTSFFTNICVSYLAKYLF) form a helical membrane-spanning segment. The tract at residues 502 to 580 (FESGTLPPKL…EGSGTEDNLQ (79 aa)) is mediates interaction with SEC14L1. Residues 503 to 580 (ESGTLPPKLD…EGSGTEDNLQ (78 aa)) lie on the Cytoplasmic side of the membrane. The Dileucine-like motif motif lies at 527–532 (DKTILV).

The protein belongs to the sodium:solute symporter (SSF) (TC 2.A.21) family. In terms of assembly, homooligomerizes at cell surface. Interacts with SEC14L1; may regulate SLC5A7. Phosphorylated. As to expression, expressed in basal forebrain, brain stem, spinal chord, and striatum. Specific for cholinergic neurons.

It is found in the presynaptic cell membrane. The protein resides in the cell projection. It localises to the axon. Its subcellular location is the early endosome membrane. The protein localises to the cytoplasmic vesicle. It is found in the secretory vesicle. The protein resides in the synaptic vesicle membrane. The enzyme catalyses choline(out) + n Na(+)(out) = choline(in) + n Na(+)(in). Its activity is regulated as follows. Choline uptake activity is regulated by SLC5A7/CHT1 internalization (inactive form) from the cell surface and recycling of internalized SLC5A7/CHT1 into the cell surface (active form). Activated by extracellular chloride ion. Specifically inhibited by nanomolar concentrations of hemicholinium 3. Functionally, high-affinity Na(+)-coupled choline transmembrane symporter. Functions as an electrogenic, voltage-dependent transporter with variable charge/choline stoichiometry. Choline uptake and choline-induced current is also Cl(-)-dependent where Cl(-) is likely a regulatory ion rather than cotransported ion. Plays a critical role in acetylcholine (ACh) synthesis by taking up the substrate choline from the synaptic cleft into the presynaptic nerve terminals after neurotransmitter release. SLC5A7/CHT1-mediated choline high-affinity transport in cholinergic neurons is the rate-limiting step for production of ACh, thereby facilitating communication by subsequent action potentials. Localized predominantly in presynaptic terminal intracellular organelles, and translocated to the plasma membrane in active form in response to neuronal activity. The sequence is that of High affinity choline transporter 1 from Rattus norvegicus (Rat).